We begin with the raw amino-acid sequence, 168 residues long: Small ribosomal subunit protein uS5 (168 aa).

The S5 DRBM domain occupies isoleucine 17–valine 80.

It belongs to the universal ribosomal protein uS5 family. As to quaternary structure, part of the 30S ribosomal subunit. Contacts proteins S4 and S8.

In terms of biological role, with S4 and S12 plays an important role in translational accuracy. Located at the back of the 30S subunit body where it stabilizes the conformation of the head with respect to the body. This Lactobacillus helveticus (strain DPC 4571) protein is Small ribosomal subunit protein uS5.